Consider the following 335-residue polypeptide: Glyceraldehyde-3-phosphate dehydrogenase 1 (335 aa).

Residues 12–13, Asp-34, Arg-78, and Ser-120 contribute to the NAD(+) site; that span reads RI. D-glyceraldehyde 3-phosphate is bound by residues 151–153 and Thr-182; that span reads SCT. Catalysis depends on Cys-152, which acts as the Nucleophile. NAD(+) is bound at residue Asn-183. Residues Arg-197, 210–211, and Arg-233 contribute to the D-glyceraldehyde 3-phosphate site; that span reads TG. An NAD(+)-binding site is contributed by Asn-315.

It belongs to the glyceraldehyde-3-phosphate dehydrogenase family. As to quaternary structure, homotetramer. Interacts with BrxC. Post-translationally, in response to oxidative stress, the active site Cys likely reacts with bacillithiol (BSH) to form mixed disulfides to protect the Cys residue against overoxidation. S-bacillithiolation presumably leads to loss of catalytic activity. Debacillithiolation by monothiol bacilliredoxin BrxC restores the activity.

It localises to the cytoplasm. It catalyses the reaction D-glyceraldehyde 3-phosphate + phosphate + NAD(+) = (2R)-3-phospho-glyceroyl phosphate + NADH + H(+). It participates in carbohydrate degradation; glycolysis; pyruvate from D-glyceraldehyde 3-phosphate: step 1/5. In terms of biological role, involved in the glycolysis. Catalyzes the oxidative phosphorylation of glyceraldehyde 3-phosphate (G3P) to 1,3-bisphosphoglycerate (BPG) using the cofactor NAD. The first reaction step involves the formation of a hemiacetal intermediate between G3P and a cysteine residue, and this hemiacetal intermediate is then oxidized to a thioester, with concomitant reduction of NAD to NADH. The reduced NADH is then exchanged with the second NAD, and the thioester is attacked by a nucleophilic inorganic phosphate to produce BPG. The chain is Glyceraldehyde-3-phosphate dehydrogenase 1 from Bacillus subtilis (strain 168).